The primary structure comprises 112 residues: Cryptic phage CTXphi transcriptional repressor RstR (112 aa).

The 55-residue stretch at 7 to 61 folds into the HTH cro/C1-type domain; that stretch reads LANQRKAINKTQAQMADEIGISLTSYKKYESGEGLPTMENLVKIADALEISIDEL. A DNA-binding region (H-T-H motif) is located at residues 18-37; it reads QAQMADEIGISLTSYKKYES.

In terms of biological role, transcriptional repressor of the integrated CTXPhi phage gene rstA2. This Vibrio cholerae serotype O1 (strain ATCC 39315 / El Tor Inaba N16961) protein is Cryptic phage CTXphi transcriptional repressor RstR (rstR1).